Reading from the N-terminus, the 280-residue chain is MDTRFNGGVIMDVTTKEQAIIAEEAGAVAVMALERIPADIRAAGGVSRMSDPKLIKEIMSAVKIPVMAKVRIGHFVEAEILQAIGIDFIDESEVLSPADSVHHVNKRDFSTPFVCGARNLGEALRRISEGAKMIRTKGEAGTGDVVQAVSHMRQIIKEINLVKALREDELYVMAKDLQVPYDLVKYVHDNGRLPVPNFSAGGVATPADAALMRRLGADGVFVGSGIFKSGDPKKRAKAIVEAVKNYNNPEIIAKVSEDLGEAMVGINENEIKIIMAERGV.

Asp12 provides a ligand contact to D-ribose 5-phosphate. The Schiff-base intermediate with D-ribose 5-phosphate role is filled by Lys69. D-ribose 5-phosphate is bound at residue Gly141. Residue Arg153 participates in D-glyceraldehyde 3-phosphate binding. Residues Gly202 and 223-224 contribute to the D-ribose 5-phosphate site; that span reads GS.

It belongs to the PdxS/SNZ family. In terms of assembly, in the presence of PdxT, forms a dodecamer of heterodimers.

The catalysed reaction is aldehydo-D-ribose 5-phosphate + D-glyceraldehyde 3-phosphate + L-glutamine = pyridoxal 5'-phosphate + L-glutamate + phosphate + 3 H2O + H(+). It participates in cofactor biosynthesis; pyridoxal 5'-phosphate biosynthesis. Catalyzes the formation of pyridoxal 5'-phosphate from ribose 5-phosphate (RBP), glyceraldehyde 3-phosphate (G3P) and ammonia. The ammonia is provided by the PdxT subunit. Can also use ribulose 5-phosphate and dihydroxyacetone phosphate as substrates, resulting from enzyme-catalyzed isomerization of RBP and G3P, respectively. This chain is Pyridoxal 5'-phosphate synthase subunit PdxS, found in Fusobacterium nucleatum subsp. nucleatum (strain ATCC 25586 / DSM 15643 / BCRC 10681 / CIP 101130 / JCM 8532 / KCTC 2640 / LMG 13131 / VPI 4355).